The sequence spans 343 residues: MNKEALVQVAEEVRRATGLPVGWRDVERTLGALRATRDLWEAVRLSRVPLRFLVPIWEGLARRGLLRVEEGLDLLAEVPAPRPGEAACPACEGRGLVGERLPGRAAERFLAWAKERPEAIQDFDQGYVTPESTLARVALAWNWGDLEGKEVLVLGDDDLTGLAAALTGLPKRVVVLDADPRIVRFLERAAKAEGLPLEAHVHDLREPLPEAWVHAFHTFFTDPVEGPLGLQAFVGRGLLALEGEGCAGYVGLTHVEASLAKWADFQRFLLENGAVITELRDGFHVYENWGYIEQMRAWPWLPVKRRPEKPWYTSALIRLELLRRADLENARVEGDLQDEEATY.

Belongs to the branched-chain polyamine synthase family.

The protein resides in the cytoplasm. The catalysed reaction is 2 S-adenosyl 3-(methylsulfanyl)propylamine + spermidine = N(4)-bis(aminopropyl)spermidine + 2 S-methyl-5'-thioadenosine + 2 H(+). It functions in the pathway amine and polyamine biosynthesis. Involved in the biosynthesis of branched-chain polyamines, which support the growth of thermophiles under high-temperature conditions. Catalyzes the sequential condensation of spermidine with the aminopropyl groups of decarboxylated S-adenosylmethionines to produce N(4)-bis(aminopropyl)spermidine via N(4)-aminopropylspermidine. The sequence is that of N(4)-bis(aminopropyl)spermidine synthase from Thermus thermophilus.